The primary structure comprises 101 residues: NAD(P)H-quinone oxidoreductase subunit 4L, chloroplastic (101 aa).

A run of 3 helical transmembrane segments spans residues 2 to 22 (MLEHVLFLSAYLFSIGIFGLI), 32 to 52 (MCLELILNAVNLNLVTFSHLF), and 61 to 81 (IFSIFVITIAAAEAAIGLAIV).

The protein belongs to the complex I subunit 4L family. In terms of assembly, NDH is composed of at least 16 different subunits, 5 of which are encoded in the nucleus.

The protein resides in the plastid. Its subcellular location is the chloroplast thylakoid membrane. It catalyses the reaction a plastoquinone + NADH + (n+1) H(+)(in) = a plastoquinol + NAD(+) + n H(+)(out). It carries out the reaction a plastoquinone + NADPH + (n+1) H(+)(in) = a plastoquinol + NADP(+) + n H(+)(out). NDH shuttles electrons from NAD(P)H:plastoquinone, via FMN and iron-sulfur (Fe-S) centers, to quinones in the photosynthetic chain and possibly in a chloroplast respiratory chain. The immediate electron acceptor for the enzyme in this species is believed to be plastoquinone. Couples the redox reaction to proton translocation, and thus conserves the redox energy in a proton gradient. This is NAD(P)H-quinone oxidoreductase subunit 4L, chloroplastic from Piper cenocladum (Ant piper).